The following is a 398-amino-acid chain: Arylacetamide deacetylase (398 aa).

Residues 1 to 4 (GVKT) lie on the Cytoplasmic side of the membrane. A helical; Signal-anchor for type II membrane protein membrane pass occupies residues 5–22 (VLLLIVGVLGAYYVYTPL). Over 23-398 (PDNIEEPWRL…QYFEWLRENV (376 aa)) the chain is Lumenal. An N-linked (GlcNAc...) asparagine glycan is attached at Asn-77. Positions 110-112 (HGG) match the Involved in the stabilization of the negatively charged intermediate by the formation of the oxyanion hole motif. Cys-115 and Cys-339 are joined by a disulfide. Ser-188 is a catalytic residue. Asn-281 carries an N-linked (GlcNAc...) asparagine glycan. Residues Asp-342 and His-372 contribute to the active site.

The protein belongs to the 'GDXG' lipolytic enzyme family. Glycosylated.

Its subcellular location is the endoplasmic reticulum membrane. The protein localises to the microsome membrane. The catalysed reaction is a triacylglycerol + H2O = a diacylglycerol + a fatty acid + H(+). Inhibited by diisopropylphosphofluoridate (DFP). Displays cellular triglyceride lipase activity in liver, increases the levels of intracellular fatty acids derived from the hydrolysis of newly formed triglyceride stores and plays a role in very low-density lipoprotein assembly. Displays serine esterase activity in liver. Deacetylates a variety of arylacetamide substrates, including xenobiotic compounds and procarcinogens, converting them to the primary arylamide compounds and increasing their toxicity. The protein is Arylacetamide deacetylase of Oryctolagus cuniculus (Rabbit).